The primary structure comprises 500 residues: Cysteine-rich secretory protein LCCL domain-containing 1 (500 aa).

An N-terminal signal peptide occupies residues 1–23; the sequence is MMCKAQEWLRVTALLFVARAVPA. One can recognise an SCP domain in the interval 66-206; it reads LDLHNKLRSQ…PKAVYLVCNY (141 aa). The segment at 258–281 is disordered; that stretch reads EIERQQSQVHDTHVRTRSDDSDRN. 2 LCCL domains span residues 289 to 384 and 390 to 492; these read MSQI…ANSF and TVQA…TGGK. 4 disulfide bridges follow: Cys-295–Cys-313, Cys-317–Cys-337, Cys-396–Cys-418, and Cys-422–Cys-445.

Belongs to the CRISP family.

The protein resides in the secreted. This chain is Cysteine-rich secretory protein LCCL domain-containing 1 (Crispld1), found in Mus musculus (Mouse).